The chain runs to 588 residues: 2-succinyl-5-enolpyruvyl-6-hydroxy-3-cyclohexene-1-carboxylate synthase (588 aa).

The tract at residues methionine 1 to serine 22 is disordered.

The protein belongs to the TPP enzyme family. MenD subfamily. Homodimer. The cofactor is Mg(2+). Mn(2+) is required as a cofactor. Thiamine diphosphate serves as cofactor.

The enzyme catalyses isochorismate + 2-oxoglutarate + H(+) = 5-enolpyruvoyl-6-hydroxy-2-succinyl-cyclohex-3-ene-1-carboxylate + CO2. Its pathway is quinol/quinone metabolism; 1,4-dihydroxy-2-naphthoate biosynthesis; 1,4-dihydroxy-2-naphthoate from chorismate: step 2/7. The protein operates within quinol/quinone metabolism; menaquinone biosynthesis. Its function is as follows. Catalyzes the thiamine diphosphate-dependent decarboxylation of 2-oxoglutarate and the subsequent addition of the resulting succinic semialdehyde-thiamine pyrophosphate anion to isochorismate to yield 2-succinyl-5-enolpyruvyl-6-hydroxy-3-cyclohexene-1-carboxylate (SEPHCHC). This is 2-succinyl-5-enolpyruvyl-6-hydroxy-3-cyclohexene-1-carboxylate synthase from Clavibacter michiganensis subsp. michiganensis (strain NCPPB 382).